Reading from the N-terminus, the 683-residue chain is DNA ligase (683 aa).

NAD(+) is bound by residues 29 to 33 (DAEFD), 79 to 80 (SL), and E109. The N6-AMP-lysine intermediate role is filled by K111. Residues R132, E172, K288, and K312 each contribute to the NAD(+) site. Residues C406, C409, C425, and C431 each coordinate Zn(2+). One can recognise a BRCT domain in the interval 595 to 683 (SVPRTLAGVT…GPPAEAGEPT (89 aa)).

This sequence belongs to the NAD-dependent DNA ligase family. LigA subfamily. The cofactor is Mg(2+). Mn(2+) serves as cofactor.

It carries out the reaction NAD(+) + (deoxyribonucleotide)n-3'-hydroxyl + 5'-phospho-(deoxyribonucleotide)m = (deoxyribonucleotide)n+m + AMP + beta-nicotinamide D-nucleotide.. DNA ligase that catalyzes the formation of phosphodiester linkages between 5'-phosphoryl and 3'-hydroxyl groups in double-stranded DNA using NAD as a coenzyme and as the energy source for the reaction. It is essential for DNA replication and repair of damaged DNA. This is DNA ligase from Mycobacterium ulcerans (strain Agy99).